Reading from the N-terminus, the 482-residue chain is F-box/LRR-repeat protein At3g58930 (482 aa).

In terms of domain architecture, F-box spans 1–47 (MDRVSNLPDGVRGHILSFLPAKHIALTSVLSKSWLNLWKLIPILDID). 5 LRR repeats span residues 122–150 (SYED…KIRN), 175–200 (SDLI…RMAS), 222–248 (GTGC…NYSD), 313–344 (ILYL…GIKS), and 345–370 (EEGR…IIEG).

The chain is F-box/LRR-repeat protein At3g58930 from Arabidopsis thaliana (Mouse-ear cress).